A 291-amino-acid chain; its full sequence is 4-diphosphocytidyl-2-C-methyl-D-erythritol kinase (291 aa).

Lys-11 is a catalytic residue. ATP is bound at residue 97–107 (PVAAGIGGGSS). Residue Asp-139 is part of the active site.

The protein belongs to the GHMP kinase family. IspE subfamily.

It carries out the reaction 4-CDP-2-C-methyl-D-erythritol + ATP = 4-CDP-2-C-methyl-D-erythritol 2-phosphate + ADP + H(+). The protein operates within isoprenoid biosynthesis; isopentenyl diphosphate biosynthesis via DXP pathway; isopentenyl diphosphate from 1-deoxy-D-xylulose 5-phosphate: step 3/6. Functionally, catalyzes the phosphorylation of the position 2 hydroxy group of 4-diphosphocytidyl-2C-methyl-D-erythritol. The chain is 4-diphosphocytidyl-2-C-methyl-D-erythritol kinase from Methylorubrum extorquens (strain PA1) (Methylobacterium extorquens).